The primary structure comprises 546 residues: Choline oxidase (546 aa).

Residues 23-24, Glu-44, Trp-71, 90-92, 96-103, Ala-232, and Tyr-465 contribute to the FAD site; these read SA, AKV, and CSSHNSCI. At His-99 the chain carries Tele-8alpha-FAD histidine. The Proton acceptor role is filled by His-466. FAD-binding positions include Ala-500 and 510-512; that span reads NPN.

The protein belongs to the GMC oxidoreductase family. As to quaternary structure, homodimer. It depends on FAD as a cofactor.

It carries out the reaction choline + 2 O2 + H2O = glycine betaine + 2 H2O2 + H(+). Its pathway is amine and polyamine biosynthesis; betaine biosynthesis via choline pathway; betaine from choline: step 1/1. Functionally, catalyzes the two-step oxidative conversion of choline to glycine-betaine with betaine aldehyde as an intermediate. Glycine-betaine accumulates to high levels in the cytoplasm of cells to prevent dehydration and plasmolysis in adverse hyperosmotic environments. Accepts either choline or the reaction intermediate betaine-aldehyde as substrate. This Arthrobacter globiformis protein is Choline oxidase (codA).